A 631-amino-acid polypeptide reads, in one-letter code: Phosphomethylpyrimidine synthase (631 aa).

Substrate contacts are provided by residues asparagine 239, methionine 268, tyrosine 297, histidine 333, 353-355 (SRG), 394-397 (DGLR), and glutamate 433. Histidine 437 provides a ligand contact to Zn(2+). Residue tyrosine 460 participates in substrate binding. Histidine 501 is a binding site for Zn(2+). Residues cysteine 581, cysteine 584, and cysteine 589 each coordinate [4Fe-4S] cluster.

Belongs to the ThiC family. Homodimer. It depends on [4Fe-4S] cluster as a cofactor.

It carries out the reaction 5-amino-1-(5-phospho-beta-D-ribosyl)imidazole + S-adenosyl-L-methionine = 4-amino-2-methyl-5-(phosphooxymethyl)pyrimidine + CO + 5'-deoxyadenosine + formate + L-methionine + 3 H(+). Its pathway is cofactor biosynthesis; thiamine diphosphate biosynthesis. Functionally, catalyzes the synthesis of the hydroxymethylpyrimidine phosphate (HMP-P) moiety of thiamine from aminoimidazole ribotide (AIR) in a radical S-adenosyl-L-methionine (SAM)-dependent reaction. The sequence is that of Phosphomethylpyrimidine synthase from Escherichia fergusonii (strain ATCC 35469 / DSM 13698 / CCUG 18766 / IAM 14443 / JCM 21226 / LMG 7866 / NBRC 102419 / NCTC 12128 / CDC 0568-73).